The primary structure comprises 60 residues: Large ribosomal subunit protein bL32 (60 aa).

A compositionally biased stretch (basic residues) spans 1-20; the sequence is MAVQKSRKSRSRRDMRRSHH. The tract at residues 1–60 is disordered; that stretch reads MAVQKSRKSRSRRDMRRSHHHMEVAELSIDATTGEKHRRHHMTKDGFYRGRQLFKASQED.

It belongs to the bacterial ribosomal protein bL32 family.

This chain is Large ribosomal subunit protein bL32, found in Psychrobacter sp. (strain PRwf-1).